The primary structure comprises 309 residues: Tagatose-6-phosphate kinase (309 aa).

Belongs to the carbohydrate kinase PfkB family. LacC subfamily.

The enzyme catalyses D-tagatofuranose 6-phosphate + ATP = D-tagatofuranose 1,6-bisphosphate + ADP + H(+). The protein operates within carbohydrate metabolism; D-tagatose 6-phosphate degradation; D-glyceraldehyde 3-phosphate and glycerone phosphate from D-tagatose 6-phosphate: step 1/2. The protein is Tagatose-6-phosphate kinase of Streptococcus pneumoniae (strain ATCC 700669 / Spain 23F-1).